The following is a 92-amino-acid chain: Small ribosomal subunit protein uS19 (92 aa).

The protein belongs to the universal ribosomal protein uS19 family.

Protein S19 forms a complex with S13 that binds strongly to the 16S ribosomal RNA. The protein is Small ribosomal subunit protein uS19 of Paramagnetospirillum magneticum (strain ATCC 700264 / AMB-1) (Magnetospirillum magneticum).